Reading from the N-terminus, the 152-residue chain is MSFNIFIASDHTGLTLKKIISEHLKTKQFNVVDLGPNYFDANDDYPDFAFLVADKVKKNSDKDLGILICGTGVGVCMAANKVKGVLAALVVSEKTAALARQHDNANVLCLSSRFVTDSENIKIVDDFLKANFEGGRHQRRIDKIIRYEKETE.

10-11 (DH) serves as a coordination point for D-ribulose 5-phosphate. Cysteine 69 acts as the Proton acceptor in catalysis. Position 70–74 (70–74 (GTGVG)) interacts with D-ribulose 5-phosphate. Histidine 102 acts as the Proton donor in catalysis. Residues aspartate 103, arginine 113, arginine 136, and arginine 140 each contribute to the D-ribulose 5-phosphate site.

It belongs to the LacAB/RpiB family. In terms of assembly, homodimer.

The enzyme catalyses aldehydo-D-ribose 5-phosphate = D-ribulose 5-phosphate. It functions in the pathway carbohydrate degradation; pentose phosphate pathway; D-ribose 5-phosphate from D-ribulose 5-phosphate (non-oxidative stage): step 1/1. Catalyzes the interconversion of ribulose-5-P and ribose-5-P. The protein is Probable ribose-5-phosphate isomerase B of Mycoplasma genitalium (strain ATCC 33530 / DSM 19775 / NCTC 10195 / G37) (Mycoplasmoides genitalium).